Consider the following 339-residue polypeptide: Enhancer of mRNA-decapping protein 1 (339 aa).

2 disordered regions span residues 1 to 240 and 309 to 339; these read MMMH…PPRY and FPVN…SAKK. Residues 13-25 are compositionally biased toward polar residues; that stretch reads SPGSENHSNPASR. 2 stretches are compositionally biased toward basic and acidic residues: residues 26–38 and 91–100; these read EQSK…ERRL and DNKEKNKKLL. The segment covering 111–131 has biased composition (low complexity); sequence NFSFYSESNSNSNSNVSSNSN. Residues 163-173 are compositionally biased toward basic and acidic residues; sequence RPDKNGKKGPV. The span at 196 to 212 shows a compositional bias: polar residues; sequence FQRTSPKQQANTINDEN. Low complexity predominate over residues 213–237; that stretch reads SSPSSSASSVSMSSPRPVAGAVAAP.

Belongs to the EDC family.

The protein localises to the cytoplasm. Its function is as follows. mRNA-binding protein which stimulates mRNA decapping. This is Enhancer of mRNA-decapping protein 1 (EDC1) from Scheffersomyces stipitis (strain ATCC 58785 / CBS 6054 / NBRC 10063 / NRRL Y-11545) (Yeast).